The following is a 125-amino-acid chain: Large ribosomal subunit protein bL12 (125 aa).

It belongs to the bacterial ribosomal protein bL12 family. In terms of assembly, homodimer. Part of the ribosomal stalk of the 50S ribosomal subunit. Forms a multimeric L10(L12)X complex, where L10 forms an elongated spine to which 2 to 4 L12 dimers bind in a sequential fashion. Binds GTP-bound translation factors.

Its function is as follows. Forms part of the ribosomal stalk which helps the ribosome interact with GTP-bound translation factors. Is thus essential for accurate translation. The polypeptide is Large ribosomal subunit protein bL12 (Ruthia magnifica subsp. Calyptogena magnifica).